Here is a 1454-residue protein sequence, read N- to C-terminus: E3 ubiquitin-protein ligase substrate receptor MMS22 (1454 aa).

The disordered stretch occupies residues 159 to 178; it reads NSSVQSQRYDSDEEIPKKRH. Residues 1201-1454 form a required for interaction with MMS1 region; it reads YDEGDISRNF…SEPFKTFKNT (254 aa).

This sequence belongs to the MMS22 family. As to quaternary structure, component of a cullin-RING ligase (CRL) composed of 4 subunits: the RING protein HRT1, the cullin RTT101, a linker protein MMS1, and the substrate receptor MMS22. This complex further interacts with RTT107 and CTF4 to form RTT101-MMS1-MMS22-RTT107 and RTT101-MMS1-MMS22-CTF4 complexes respectively. Interacts (via C-ter) with MMS1 (via N-ter). Interacts with RTT107.

It localises to the nucleus. Functionally, substrate targeting component of a cullin-RING-based E3 ubiquitin-protein ligase complex RTT101(MMS1-MMS22). RTT101(MMS1-MMS22) promotes fork progression through damaged DNA or natural pause sites by stabilizing replication proteins like the replication fork-pausing complex (FPC) and leading-strand polymerase at stalled replication forks. RTT101(MMS1-MMS22) ubiquitinates the acetylated histones H3K56ac-H4 at lysine residues H3K121, H3K122 and H3K125. Ubiquitination is required for efficient histone deposition during replication-coupled nucleosome assembly, probably by facilitating the transfer of H3-H4 from ASF1 to other chaperones involved in histone deposition. This Saccharomyces cerevisiae (strain ATCC 204508 / S288c) (Baker's yeast) protein is E3 ubiquitin-protein ligase substrate receptor MMS22 (MMS22).